The sequence spans 138 residues: uncharacterized protein (138 aa).

Residues 11-33 (ILLGLTLSLTFLYPLIITLIILY) form a helical membrane-spanning segment.

Its subcellular location is the membrane. This is an uncharacterized protein from Aquifex aeolicus (strain VF5).